The chain runs to 525 residues: NAD(P)H-quinone oxidoreductase chain 4-2 (525 aa).

The next 14 helical transmembrane spans lie at 6-26, 36-56, 91-111, 115-135, 137-157, 169-189, 212-232, 243-263, 277-297, 314-334, 335-355, 375-397, 417-437, and 464-484; these read FPWL…IPII, WYAL…FYTS, LIIL…PVTL, LFYF…AVQD, LLFF…LAIW, FILY…TMAF, LLLY…IPLH, TAPA…YALI, FAPV…LTSF, MGFV…GAVL, QMVS…ATYD, IFAM…GFVA, VIVV…LLSM, and VFVI…PKLL.

Belongs to the complex I subunit 4 family.

It is found in the cellular thylakoid membrane. The catalysed reaction is a plastoquinone + NADH + (n+1) H(+)(in) = a plastoquinol + NAD(+) + n H(+)(out). It catalyses the reaction a plastoquinone + NADPH + (n+1) H(+)(in) = a plastoquinol + NADP(+) + n H(+)(out). NDH-1 shuttles electrons from NAD(P)H, via FMN and iron-sulfur (Fe-S) centers, to quinones in the respiratory chain. The immediate electron acceptor for the enzyme in this species is believed to be plastoquinone. Couples the redox reaction to proton translocation (for every two electrons transferred, four hydrogen ions are translocated across the cytoplasmic membrane), and thus conserves the redox energy in a proton gradient. In Nostoc sp. (strain PCC 7120 / SAG 25.82 / UTEX 2576), this protein is NAD(P)H-quinone oxidoreductase chain 4-2 (ndhD2).